A 232-amino-acid chain; its full sequence is TIR domain-containing adapter molecule 2 (232 aa).

Residues 1-10 (MGIGKSKMDP) are compositionally biased toward basic and acidic residues. The tract at residues 1–71 (MGIGKSKMDP…VEERPEEDTE (71 aa)) is disordered. Gly-2 carries N-myristoyl glycine lipidation. The span at 19 to 29 (KSQSVDTSQSH) shows a compositional bias: polar residues. The span at 30–42 (HMSDSKQSEEISL) shows a compositional bias: basic and acidic residues. A compositionally biased stretch (acidic residues) spans 55–71 (PAEEQEGVEERPEEDTE). The TIR domain maps to 70-226 (TEEEVFLKFV…AIWKETRNTV (157 aa)). Position 164 is a phosphotyrosine (Tyr-164).

Homodimer. Interacts with TLR4, TICAM1, IRF3 and IRF7 in response to LPS. Interacts with IL1R1, IL1RAP, IRAK2, IRAK3 and TRAF6. Interacts with protein kinase-inactive mutants of IRAK1 and IRAK4. Isoform 1 interacts with isoform 2; the interaction occurs in late endosomes and disrupts the interaction between isoform 1 and TICAM1. Interacts with MYD88; the interaction decreases after IL-18 stimulation in a time-dependent manner. Interacts with IL18R1 and IL18RAP. Interacts with TLR2. Interacts with RAB11FIP2. Post-translationally, myristoylated. Required for membrane association which is critical for its ability to initiate efficient signaling. Phosphorylated by PRKCE in response to LPS. Phosphorylation is essential for its function. It is depleted from the membrane upon phosphorylation. Tyrosine phosphorylation is inhibited by phosphatase PTPN4.

It is found in the cytoplasm. The protein resides in the golgi apparatus. Its subcellular location is the cell membrane. It localises to the endoplasmic reticulum. The protein localises to the early endosome. It is found in the late endosome. The protein resides in the cell projection. Its subcellular location is the phagocytic cup. Its function is as follows. Functions as a sorting adapter in different signaling pathways to facilitate downstream signaling leading to type I interferon induction. In TLR4 signaling, physically bridges TLR4 and TICAM1 and functionally transmits signal to TICAM1 in early endosomes after endocytosis of TLR4. In TLR2 signaling, physically bridges TLR2 and MYD88 and is required for the TLR2-dependent movement of MYD88 to endosomes following ligand engagement. Involved in IL-18 signaling and is proposed to function as a sorting adapter for MYD88 in IL-18 signaling during adaptive immune response. Forms a complex with RAB11FIP2 that is recruited to the phagosomes to promote the activation of the actin-regulatory GTPases RAC1 and CDC42 and subsequent phagocytosis of Gram-negative bacteria. This Bos taurus (Bovine) protein is TIR domain-containing adapter molecule 2 (TICAM2).